The following is a 141-amino-acid chain: Holo-[acyl-carrier-protein] synthase (141 aa).

Mg(2+) contacts are provided by Asp-8 and Glu-61.

This sequence belongs to the P-Pant transferase superfamily. AcpS family. Mg(2+) serves as cofactor.

The protein localises to the cytoplasm. The enzyme catalyses apo-[ACP] + CoA = holo-[ACP] + adenosine 3',5'-bisphosphate + H(+). In terms of biological role, transfers the 4'-phosphopantetheine moiety from coenzyme A to a Ser of acyl-carrier-protein. The chain is Holo-[acyl-carrier-protein] synthase from Rhodopseudomonas palustris (strain HaA2).